The primary structure comprises 136 residues: Large-conductance mechanosensitive channel (136 aa).

A run of 2 helical transmembrane segments spans residues 9 to 29 and 79 to 99; these read AFAS…GAAF and IQTV…LKAI.

This sequence belongs to the MscL family. In terms of assembly, homopentamer.

Its subcellular location is the cell inner membrane. Its function is as follows. Channel that opens in response to stretch forces in the membrane lipid bilayer. May participate in the regulation of osmotic pressure changes within the cell. This Shewanella sp. (strain MR-4) protein is Large-conductance mechanosensitive channel.